The following is a 155-amino-acid chain: Superoxide dismutase [Cu-Zn] (155 aa).

Cu cation contacts are provided by histidine 47, histidine 49, and histidine 64. Residues cysteine 58 and cysteine 147 are joined by a disulfide bond. Residues histidine 64, histidine 72, histidine 81, and aspartate 84 each coordinate Zn(2+). Residue histidine 121 participates in Cu cation binding. Arginine 144 is a binding site for substrate.

It belongs to the Cu-Zn superoxide dismutase family. As to quaternary structure, homodimer. Requires Cu cation as cofactor. The cofactor is Zn(2+).

Its subcellular location is the cytoplasm. It carries out the reaction 2 superoxide + 2 H(+) = H2O2 + O2. In terms of biological role, destroys radicals which are normally produced within the cells and which are toxic to biological systems. The protein is Superoxide dismutase [Cu-Zn] (SOD1) of Kluyveromyces lactis (strain ATCC 8585 / CBS 2359 / DSM 70799 / NBRC 1267 / NRRL Y-1140 / WM37) (Yeast).